We begin with the raw amino-acid sequence, 247 residues long: UDP-2,3-diacylglucosamine hydrolase (247 aa).

Mn(2+) contacts are provided by Asp8, His10, Asp41, Asn79, and His115. 79–80 contacts substrate; that stretch reads NH. Substrate is bound by residues Asp123, Lys165, Lys168, and His196. His196 and His198 together coordinate Mn(2+).

Belongs to the LpxH family. The cofactor is Mn(2+).

The protein resides in the cell inner membrane. It carries out the reaction UDP-2-N,3-O-bis[(3R)-3-hydroxytetradecanoyl]-alpha-D-glucosamine + H2O = 2-N,3-O-bis[(3R)-3-hydroxytetradecanoyl]-alpha-D-glucosaminyl 1-phosphate + UMP + 2 H(+). The protein operates within glycolipid biosynthesis; lipid IV(A) biosynthesis; lipid IV(A) from (3R)-3-hydroxytetradecanoyl-[acyl-carrier-protein] and UDP-N-acetyl-alpha-D-glucosamine: step 4/6. Hydrolyzes the pyrophosphate bond of UDP-2,3-diacylglucosamine to yield 2,3-diacylglucosamine 1-phosphate (lipid X) and UMP by catalyzing the attack of water at the alpha-P atom. Involved in the biosynthesis of lipid A, a phosphorylated glycolipid that anchors the lipopolysaccharide to the outer membrane of the cell. This chain is UDP-2,3-diacylglucosamine hydrolase, found in Blochmanniella floridana.